The sequence spans 465 residues: Ribulose bisphosphate carboxylase large chain (465 aa).

K4 is subject to N6,N6,N6-trimethyllysine. Residues N113 and T163 each coordinate substrate. The Proton acceptor role is filled by K165. K167 is a substrate binding site. 3 residues coordinate Mg(2+): K191, D193, and E194. K191 is modified (N6-carboxylysine). Residue H284 is the Proton acceptor of the active site. 3 residues coordinate substrate: R285, H317, and S369.

This sequence belongs to the RuBisCO large chain family. Type I subfamily. As to quaternary structure, heterohexadecamer of 8 large chains and 8 small chains; disulfide-linked. The disulfide link is formed within the large subunit homodimers. Mg(2+) is required as a cofactor. Post-translationally, the disulfide bond which can form in the large chain dimeric partners within the hexadecamer appears to be associated with oxidative stress and protein turnover.

The protein resides in the plastid. It is found in the chloroplast. The catalysed reaction is 2 (2R)-3-phosphoglycerate + 2 H(+) = D-ribulose 1,5-bisphosphate + CO2 + H2O. The enzyme catalyses D-ribulose 1,5-bisphosphate + O2 = 2-phosphoglycolate + (2R)-3-phosphoglycerate + 2 H(+). In terms of biological role, ruBisCO catalyzes two reactions: the carboxylation of D-ribulose 1,5-bisphosphate, the primary event in carbon dioxide fixation, as well as the oxidative fragmentation of the pentose substrate in the photorespiration process. Both reactions occur simultaneously and in competition at the same active site. In Fragaria ananassa (Strawberry), this protein is Ribulose bisphosphate carboxylase large chain.